The following is a 114-amino-acid chain: Hydrogenase maturation factor HypA (114 aa).

Histidine 2 lines the Ni(2+) pocket. Zn(2+) contacts are provided by cysteine 73, cysteine 76, cysteine 90, and cysteine 93.

Belongs to the HypA/HybF family.

Its function is as follows. Involved in the maturation of [NiFe] hydrogenases. Required for nickel insertion into the metal center of the hydrogenase. This Klebsiella pneumoniae (strain 342) protein is Hydrogenase maturation factor HypA.